A 315-amino-acid polypeptide reads, in one-letter code: Jacalin-related lectin 10 (315 aa).

A signal peptide spans 1–23 (MVIIYIFLFLSSAIIDSTGLAKA). 2 consecutive Jacalin-type lectin domains span residues 24–165 (QKLD…YLTT) and 168–312 (PTKS…YFSP).

Belongs to the jacalin lectin family.

The protein is Jacalin-related lectin 10 (JAL10) of Arabidopsis thaliana (Mouse-ear cress).